We begin with the raw amino-acid sequence, 822 residues long: MMLLSSSYSGGQFPGVSPLGTRPKRSTTVVPRPVVTRATAGGVRNNLEVVGNAGTLQGMDIDELRVIVRKQLQGVELSPSSYDTAWVAMVPVQGSRQSPCFPQCVEWILQNQQEDGSWGHSAGPSGEVNKDILLSTLACVLALNIWNVGQDHIRRGLSFIGRNFSVAIDGQCAAPVGFNITFSGMLRLAIGMGLKFPVMETDIDSIFRLREVEFERDAGGTASARKAFMAYVSEGLGREQDWDHVMAYQRKNGSLFNSPSTTAASAIHSCNDRALDYLVSLTSKLGGPVPAIYPDKVYSQLCMVDTLEKMGISSDFACDIRDILDMTYSCWMQDEEEIMLDMATCAKAFRLLRMHGYDVSSEGMARFAERSSFDDSIHAYLNDTKPLLELYKSSQVHFLEEDFILENIGSWSAKLLKQQLSFNKISKSLMPEVEYALKYPFYATVEVLEHKGNIERFNVNGFQRLKSGYCGSGADKEILALAVNKFHYAQSVYQQELRYLESWVAEFRLDELKFARVIPLQSLLSAVVPLFPCELSDARIAWSQNAILTAVVDDLFDGGGSMEEMLNLVALFDKWDDHGEIGFCSSNVEIMFNAVYNTTKRIGAKAALVQKRCVIDHIAEQWQVMVRAMLTEAEWAAGKHIPATMGEYMSVAEPSFALGPIVPVSAYLLGEELPEEAVRSPEYGRLLGLASAVGRLLNDVMTYEKEMGTGKLNSVVLLQPLAAGGAASRGGGGAPAPAPASVEAARAEVRRAIQASWRDLHGLVFGSGGGSSSSIIPRPCREVFWHTGKVASVFYQEGDGYARKAMRSMANAVILEPLHLQE.

Over residues 1–10 (MMLLSSSYSG) the composition is skewed to polar residues. Residues 1–29 (MMLLSSSYSGGQFPGVSPLGTRPKRSTTV) are disordered. The Mg(2+) site is built by aspartate 553, aspartate 557, asparagine 698, threonine 702, and glutamate 706. Positions 553 to 557 (DDLFD) match the DDXXD motif motif.

It belongs to the terpene synthase family. Requires Mg(2+) as cofactor.

The enzyme catalyses 9alpha-copalyl diphosphate = stemar-13-ene + diphosphate. Its function is as follows. Catalyzes the conversion of syn-copalyl diphosphate to the phytoalexin precursor stemarene. The chain is Stemar-13-ene synthase (KSL8) from Oryza sativa subsp. japonica (Rice).